Here is a 511-residue protein sequence, read N- to C-terminus: D-alanine--D-alanyl carrier protein ligase (511 aa).

152–153 is a binding site for ATP; it reads TS. Asp199 is a D-alanine binding site. 294–299 provides a ligand contact to ATP; the sequence is NAYGPT. Val303 is a D-alanine binding site. ATP is bound by residues Asp385, 397–400, and Lys499; that span reads YGGR. Lys499 is a D-alanine binding site.

It belongs to the ATP-dependent AMP-binding enzyme family. DltA subfamily.

The protein localises to the cytoplasm. It carries out the reaction holo-[D-alanyl-carrier protein] + D-alanine + ATP = D-alanyl-[D-alanyl-carrier protein] + AMP + diphosphate. The protein operates within cell wall biogenesis; lipoteichoic acid biosynthesis. Functionally, catalyzes the first step in the D-alanylation of lipoteichoic acid (LTA), the activation of D-alanine and its transfer onto the D-alanyl carrier protein (Dcp) DltC. In an ATP-dependent two-step reaction, forms a high energy D-alanyl-AMP intermediate, followed by transfer of the D-alanyl residue as a thiol ester to the phosphopantheinyl prosthetic group of the Dcp. D-alanylation of LTA plays an important role in modulating the properties of the cell wall in Gram-positive bacteria, influencing the net charge of the cell wall. In Streptococcus agalactiae serotype V (strain ATCC BAA-611 / 2603 V/R), this protein is D-alanine--D-alanyl carrier protein ligase.